We begin with the raw amino-acid sequence, 561 residues long: MESRGRRCPEMISVLGPISGHVLKAVFSRGDTPVLPHETRLLQTGIHVRVSQPSLILVSQYTPDSTPCHRGDNQLQVQHTYFTGSEVENVSVNVHNPTGRSICPSQEPMSIYVYALPLKMLNIPSINVHHYPSAAERKHRHLPVADAVIHASGKQMWQARLTVSGLAWTRQQNQWKEPDVYYTSAFVFPTKDVALRHVVCAHELVCSMENTRATKMQVIGDQYVKVYLESFCEDVPSGKLFMHVTLGSDVEEDLTMTRNPQPFMRPHERNGFTVLCPKNMIIKPGKISHIMLDVAFTSHEHFGLLCPKSIPGLSISGNLLMNGQQIFLEVQAIRETVELRQYDPVAALFFFDIDLLLQRGPQYSEHPTFTSQYRIQGKLEYRHTWDRHDEGAAQGDDDVWTSGSDSDEELVTTERKTPRVTGGGAMAGASTSAGRKRKSASSATACTSGVMTRGRLKAESTVAPEEDTDEDSDNEIHNPAVFTWPPWQAGILARNLVPMVATVQGQNLKYQEFFWDANDIYRIFAELEGVWQPAAQPKRRRHRQDALPGPCIASTPKKHRG.

Disordered stretches follow at residues Asp-389–Glu-475 and Ala-534–Gly-561. Residues Gly-395–Val-411 are compositionally biased toward acidic residues. Low complexity predominate over residues Ala-440 to Gly-449. A compositionally biased stretch (acidic residues) spans Pro-464 to Asp-473. Ser-472 is modified (phosphoserine). The Bipartite nuclear localization signal motif lies at Pro-537 to Arg-560.

The protein belongs to the herpesviridae pp65 family. In terms of assembly, interacts with host NCL/nucleolin. Interacts with host IFI16. Interacts with host CGAS; this interaction inhibits CGAS enzymatic activity. Post-translationally, phosphorylation may play a role in the localization of the protein.

It localises to the virion tegument. The protein resides in the host nucleus. The protein localises to the host cytoplasm. Functionally, counteracts the host antiviral immune response when activated and phosphorylated, by preventing host IRF3 from entering the nucleus. Also inhibits the type I interferon production by inactivating the enzymatic activity of DNA sensor CGAS without affecting STING1. Participates in the transactivation of viral major immediate-early genes by the recruitment of host IFI16 to the promoters pf these genes. In Human cytomegalovirus (strain AD169) (HHV-5), this protein is 65 kDa phosphoprotein (UL83).